A 509-amino-acid polypeptide reads, in one-letter code: MSSHIQIFDTTLRDGEQTPGVNFTFDERLRIALQLEKWGVDVIEAGFPASSTGSFKSVQAIAQTLTTTAVCGLARCKKSDIDAVYEATKDAAKPVVHVFIATSPIHLEHKLKMSQEDVLASIKEHVTYAKQLFDVVQFSPEDATRTELPFLVKCVQTAVDAGATVINIPDTVGYSYHDEYAHIFKTLTESVTSSNEIIYSAHCHDDLGMAVSNSLAAIEGGARRIEGTVNGIGERAGNAALEEVALALYIRNDHYGAQTALNLEETKKTSDLISRYAGIRVPRNKAIVGQNAFSHESGIHQDGVLKHRETYEIMTPQLVGVSTTELPLGKLSGKHAFSKKLKALGYDIDKEAQIDLFKQFKAIADKKKSVSDRDIHAIIQGSEHEHQALYKLETLQLQYVSSGLQSAVVVIKDKEGHIYQDSSIGTGSIVAIYNAVDRIFQKETELIDYRINSVTEGTDAQAEVHVNLLIEGKTVNGFGIDHDILQASCKAYVEAHAKFAAENVEKVGN.

A Pyruvate carboxyltransferase domain is found at 5-267 (IQIFDTTLRD…QTALNLEETK (263 aa)). Mn(2+)-binding residues include Asp14, His202, His204, and Asn238. The regulatory domain stretch occupies residues 391–509 (KLETLQLQYV…AAENVEKVGN (119 aa)).

This sequence belongs to the alpha-IPM synthase/homocitrate synthase family. LeuA type 1 subfamily. In terms of assembly, homodimer. The cofactor is Mn(2+).

The protein resides in the cytoplasm. It carries out the reaction 3-methyl-2-oxobutanoate + acetyl-CoA + H2O = (2S)-2-isopropylmalate + CoA + H(+). The protein operates within amino-acid biosynthesis; L-leucine biosynthesis; L-leucine from 3-methyl-2-oxobutanoate: step 1/4. Functionally, catalyzes the condensation of the acetyl group of acetyl-CoA with 3-methyl-2-oxobutanoate (2-ketoisovalerate) to form 3-carboxy-3-hydroxy-4-methylpentanoate (2-isopropylmalate). The chain is 2-isopropylmalate synthase from Staphylococcus aureus (strain MRSA252).